Here is a 430-residue protein sequence, read N- to C-terminus: Tol-Pal system protein TolB (430 aa).

Residues 1 to 21 form the signal peptide; the sequence is MKQALRVAFGFLILWASVLHA.

This sequence belongs to the TolB family. As to quaternary structure, the Tol-Pal system is composed of five core proteins: the inner membrane proteins TolA, TolQ and TolR, the periplasmic protein TolB and the outer membrane protein Pal. They form a network linking the inner and outer membranes and the peptidoglycan layer.

The protein localises to the periplasm. In terms of biological role, part of the Tol-Pal system, which plays a role in outer membrane invagination during cell division and is important for maintaining outer membrane integrity. TolB occupies a key intermediary position in the Tol-Pal system because it communicates directly with both membrane-embedded components, Pal in the outer membrane and TolA in the inner membrane. In Shigella boydii serotype 4 (strain Sb227), this protein is Tol-Pal system protein TolB.